A 235-amino-acid polypeptide reads, in one-letter code: uncharacterized protein (235 aa).

To E.coli YbeR.

This is an uncharacterized protein from Escherichia coli (strain K12).